The following is a 536-amino-acid chain: Probable E3 ubiquitin-protein ligase ARI13 (536 aa).

The tract at residues 83–328 is TRIAD supradomain; the sequence is KISSCGICFK…GFYKFCNVSM (246 aa). 24 residues coordinate Zn(2+): Cys87, Cys90, Cys106, His108, Cys111, Cys114, Cys135, Cys140, Cys180, Cys185, Cys210, Cys212, Cys217, Cys220, His225, Cys230, Cys277, Cys280, Cys297, Cys299, Cys304, Cys307, His314, and Cys324. An RING-type 1 zinc finger spans residues 87–140; the sequence is CGICFKTCDDGDYLISTPFCSHMFCKSCWRKYLEKNFYLVEKTQTRISCPHGAC. The segment at 158–230 adopts an IBR-type zinc-finger fold; the sequence is EMYVEYILRS…MLESHKPVTC (73 aa). The segment at 277–307 adopts an RING-type 2; atypical zinc-finger fold; the sequence is CPHCLRPADLGTKQYLRFLTCACNGRFCWKC. The RanBP2-type zinc-finger motif lies at 495–526; the sequence is DYGGLFWLCDRCTYGNTWFHKECLMCSDDIAA.

It belongs to the RBR family. Ariadne subfamily. It depends on Zn(2+) as a cofactor.

It catalyses the reaction [E2 ubiquitin-conjugating enzyme]-S-ubiquitinyl-L-cysteine + [acceptor protein]-L-lysine = [E2 ubiquitin-conjugating enzyme]-L-cysteine + [acceptor protein]-N(6)-ubiquitinyl-L-lysine.. The protein operates within protein modification; protein ubiquitination. In terms of biological role, might act as an E3 ubiquitin-protein ligase, or as part of E3 complex, which accepts ubiquitin from specific E2 ubiquitin-conjugating enzymes and then transfers it to substrates. This is Probable E3 ubiquitin-protein ligase ARI13 (ARI13) from Arabidopsis thaliana (Mouse-ear cress).